The primary structure comprises 100 residues: Large ribosomal subunit protein bL21 (100 aa).

It belongs to the bacterial ribosomal protein bL21 family. Part of the 50S ribosomal subunit. Contacts protein L20.

Its function is as follows. This protein binds to 23S rRNA in the presence of protein L20. The chain is Large ribosomal subunit protein bL21 from Rhodospirillum rubrum (strain ATCC 11170 / ATH 1.1.1 / DSM 467 / LMG 4362 / NCIMB 8255 / S1).